Consider the following 502-residue polypeptide: Probable cytochrome P450 28d1 (502 aa).

Cys-446 lines the heme pocket.

Belongs to the cytochrome P450 family. Requires heme as cofactor.

It localises to the endoplasmic reticulum membrane. The protein resides in the microsome membrane. Functionally, may be involved in the metabolism of insect hormones and in the breakdown of synthetic insecticides. The sequence is that of Probable cytochrome P450 28d1 (Cyp28d1) from Drosophila melanogaster (Fruit fly).